The sequence spans 547 residues: MAAKDVRFGDSARHRMVAGVNVLADAVKVTLGPKGRNVVLDRSFGAPTVTKDGVSVAKEIELKDKLENMGAQMVKEVASKTSDVAGDGTTTATVLAQSIVNEGMKFVAAGMNPMDLKRGIDKAVNAITEELKKISKPCTTSKEIAQVGSISANSDAPIGQIIADAMDKVGKEGVITVEDGSGLENELDVVEGMQFDRGYLSPYFINNADKQMAIMDDPFILLFDKKISNIRDLLPVLEQVAKAGKPLMIVAEDVDGEALATLVVNNIRGILKTCAVKAPGFGDRRKAMLEDMAILTGGTVIAEEVGLSLEKATLQDLGRAKRIEVGKENTTIIDGAGDGNAIKGRIAQINKQIEEVTSDYDKEKLQERKAKLAGGVAVIKVGAATEVEMKEKKARVEDALHATRAAVEEGIVPGGGVALLRAKAAAAAIKGDNHDQDAGVKIVLRAIEEPLRQIVKNCGDEPSVVVNKVLEGEGNFGYNAGTSEYGDMVAMGVLDPTKVTRTALQNAASIAGLMLTTDCMVADLPEDKAPAMPMGGGMGDMGGMGMM.

Residues 30 to 33 (TLGP), Lys-51, 87 to 91 (DGTTT), Gly-415, and Asp-495 each bind ATP.

The protein belongs to the chaperonin (HSP60) family. As to quaternary structure, forms a cylinder of 14 subunits composed of two heptameric rings stacked back-to-back. Interacts with the co-chaperonin GroES.

The protein localises to the cytoplasm. It carries out the reaction ATP + H2O + a folded polypeptide = ADP + phosphate + an unfolded polypeptide.. Its function is as follows. Together with its co-chaperonin GroES, plays an essential role in assisting protein folding. The GroEL-GroES system forms a nano-cage that allows encapsulation of the non-native substrate proteins and provides a physical environment optimized to promote and accelerate protein folding. In Thiobacillus denitrificans (strain ATCC 25259 / T1), this protein is Chaperonin GroEL.